A 513-amino-acid chain; its full sequence is Histidine ammonia-lyase (513 aa).

Residues 144-146 (ASG) constitute a cross-link (5-imidazolinone (Ala-Gly)). A 2,3-didehydroalanine (Ser) modification is found at serine 145.

Belongs to the PAL/histidase family. Post-translationally, contains an active site 4-methylidene-imidazol-5-one (MIO), which is formed autocatalytically by cyclization and dehydration of residues Ala-Ser-Gly.

Its subcellular location is the cytoplasm. It carries out the reaction L-histidine = trans-urocanate + NH4(+). Its pathway is amino-acid degradation; L-histidine degradation into L-glutamate; N-formimidoyl-L-glutamate from L-histidine: step 1/3. The chain is Histidine ammonia-lyase from Streptococcus gordonii (strain Challis / ATCC 35105 / BCRC 15272 / CH1 / DL1 / V288).